The following is a 298-amino-acid chain: MFKENTVKLGIAPIAWTNDDMPELGAGNTFEQCISEMALAGFNGSEVGNKYPRNTVVLKKSLALRNLEIASAWFSTFLTTKPLEETVEEFIKHRDFLHDMGAKVIVVSEQGHSIQGLMDVPLFKNKPVFTEEEWNKLADGLHHLGKLAQEKGLHIVYHHHMGTGVQTTAEIEKLMDMTNPALVSLLFDTGHLVFSGEEPLYILKKYLPRIKHVHLKDIRQEVVDTVKENELSFLQAVKNGAFTVPGDGVIGFDEVFTILANSDYQGWFVVEAEQDPALANPFEYALKARKFIQEKAGL.

This sequence belongs to the IolE/MocC family. The cofactor is glutathione. Co(2+) is required as a cofactor. It depends on Mn(2+) as a cofactor.

It carries out the reaction scyllo-inosose = 3D-3,5/4-trihydroxycyclohexane-1,2-dione + H2O. It participates in polyol metabolism; myo-inositol degradation into acetyl-CoA; acetyl-CoA from myo-inositol: step 2/7. Catalyzes the dehydration of inosose (2-keto-myo-inositol, 2KMI or 2,4,6/3,5-pentahydroxycyclohexanone) to 3D-(3,5/4)-trihydroxycyclohexane-1,2-dione (D-2,3-diketo-4-deoxy-epi-inositol). In Bacillus cereus (strain ZK / E33L), this protein is Inosose dehydratase 1.